We begin with the raw amino-acid sequence, 689 residues long: Glycine--tRNA ligase beta subunit (689 aa).

The protein belongs to the class-II aminoacyl-tRNA synthetase family. Tetramer of two alpha and two beta subunits.

The protein resides in the cytoplasm. The enzyme catalyses tRNA(Gly) + glycine + ATP = glycyl-tRNA(Gly) + AMP + diphosphate. This Escherichia coli O8 (strain IAI1) protein is Glycine--tRNA ligase beta subunit.